The primary structure comprises 156 residues: Protein-export protein SecB (156 aa).

The protein belongs to the SecB family. Homotetramer, a dimer of dimers. One homotetramer interacts with 1 SecA dimer.

Its subcellular location is the cytoplasm. One of the proteins required for the normal export of preproteins out of the cell cytoplasm. It is a molecular chaperone that binds to a subset of precursor proteins, maintaining them in a translocation-competent state. It also specifically binds to its receptor SecA. This is Protein-export protein SecB from Aeromonas hydrophila subsp. hydrophila (strain ATCC 7966 / DSM 30187 / BCRC 13018 / CCUG 14551 / JCM 1027 / KCTC 2358 / NCIMB 9240 / NCTC 8049).